The sequence spans 483 residues: (R)-mandelonitrile beta-glucosyltransferase (483 aa).

Catalysis depends on H22, which acts as the Proton acceptor. An anthocyanidin is bound at residue H22. Residue D124 is the Charge relay of the active site. 7 residues coordinate UDP-alpha-D-glucose: T146, Q363, H378, W381, N382, S383, and E386. A401 provides a ligand contact to an anthocyanidin. UDP-alpha-D-glucose-binding residues include E402 and Q403.

This sequence belongs to the UDP-glycosyltransferase family.

The enzyme catalyses (R)-mandelonitrile + UDP-alpha-D-glucose = (R)-prunasin + UDP + H(+). Its function is as follows. Involved in the biosynthesis of the cyanogenic glycoside (R)-prunasin, a precursor of (R)-amygdalin, which at high concentrations is associated with intense bitterness in kernels of almond. Stereo-selectively glucosylates (R)-mandelonitrile to produce (R)-prunasin. The chain is (R)-mandelonitrile beta-glucosyltransferase from Prunus dulcis (Almond).